Here is a 423-residue protein sequence, read N- to C-terminus: Vitamin D3 receptor (423 aa).

Residues Cys-24, Cys-27, Cys-41, Cys-44, Cys-60, Cys-66, Cys-76, and Cys-79 each coordinate Zn(2+). 2 NR C4-type zinc fingers span residues 24 to 44 (CGVC…CEGC) and 60 to 84 (CPFN…LKRC). The segment at residues 24–89 (CGVCGDRATG…RLKRCVDIGM (66 aa)) is a DNA-binding region (nuclear receptor). The interval 97 to 126 (DEEVQRKREMIMKRKEEEALKDSLRPKLSE) is hinge. The NR LBD domain occupies 127–419 (EQQHIIAILL…LTPLVLEVFG (293 aa)). Residue Tyr-143 coordinates calcitriol. Positions 159–180 (MDGSTGSYSPRPTLSFSGNSSS) are disordered. The span at 171–180 (TLSFSGNSSS) shows a compositional bias: low complexity. Residue Ser-233 coordinates calcitriol. The interval 242–260 (KMIPGFRDLTSDDQIVLLK) is interaction with coactivator LXXLL motif. Residues Arg-270, Ser-274, His-301, and His-393 each contribute to the calcitriol site. The 9aaTAD motif lies at 412–420 (PLVLEVFGN).

This sequence belongs to the nuclear hormone receptor family. NR1 subfamily. Homodimer in the absence of bound vitamin D3. Heterodimer with RXRA after vitamin D3 binding. Interacts with MED1 and NCOA6. Interacts with MED1, NCOA1, NCOA2, NCOA3 and NCOA6 coactivators, leading to a strong increase of transcription of target genes. Interacts with the corepressor NCOR1. Interacts with SNW1. Interacts with IRX4, the interaction does not affect its transactivation activity. Interacts with CRY1. Interacts with CRY2 in a ligand-dependent manner. Ubiquitinated by UBR5, leading to its degradation: UBR5 specifically recognizes and binds ligand-bound VDR when it is not associated with coactivators (NCOAs). In presence of NCOAs, the UBR5-degron is not accessible, preventing its ubiquitination and degradation. In terms of tissue distribution, detected in intestine and kidney.

It localises to the nucleus. The protein localises to the cytoplasm. Nuclear receptor for calcitriol, the active form of vitamin D3 which mediates the action of this vitamin on cells. Enters the nucleus upon vitamin D3 binding where it forms heterodimers with the retinoid X receptor/RXR. The VDR-RXR heterodimers bind to specific response elements on DNA and activate the transcription of vitamin D3-responsive target genes. Plays a central role in calcium homeostasis. Also functions as a receptor for the secondary bile acid lithocholic acid (LCA) and its metabolites. The chain is Vitamin D3 receptor (Vdr) from Rattus norvegicus (Rat).